The chain runs to 466 residues: Light-independent protochlorophyllide reductase subunit N (466 aa).

Positions 23, 48, and 108 each coordinate [4Fe-4S] cluster.

It belongs to the BchN/ChlN family. Protochlorophyllide reductase is composed of three subunits; ChlL, ChlN and ChlB. Forms a heterotetramer of two ChlB and two ChlN subunits. It depends on [4Fe-4S] cluster as a cofactor.

The catalysed reaction is chlorophyllide a + oxidized 2[4Fe-4S]-[ferredoxin] + 2 ADP + 2 phosphate = protochlorophyllide a + reduced 2[4Fe-4S]-[ferredoxin] + 2 ATP + 2 H2O. The protein operates within porphyrin-containing compound metabolism; chlorophyll biosynthesis (light-independent). Component of the dark-operative protochlorophyllide reductase (DPOR) that uses Mg-ATP and reduced ferredoxin to reduce ring D of protochlorophyllide (Pchlide) to form chlorophyllide a (Chlide). This reaction is light-independent. The NB-protein (ChlN-ChlB) is the catalytic component of the complex. The polypeptide is Light-independent protochlorophyllide reductase subunit N (Synechococcus elongatus (strain ATCC 33912 / PCC 7942 / FACHB-805) (Anacystis nidulans R2)).